The sequence spans 341 residues: tRNA uridine(34) hydroxylase (341 aa).

The Rhodanese domain maps to 139–233 (SDPEVVLVDT…YLEEVPSTET (95 aa)). The active-site Cysteine persulfide intermediate is C193. 2 stretches are compositionally biased toward basic and acidic residues: residues 306–316 (SLAEERGESHI) and 324–341 (IEER…QANK). The tract at residues 306 to 341 (SLAEERGESHIGGDIQNIIEERRQEKNDKKAKQANK) is disordered.

The protein belongs to the TrhO family.

It catalyses the reaction uridine(34) in tRNA + AH2 + O2 = 5-hydroxyuridine(34) in tRNA + A + H2O. Functionally, catalyzes oxygen-dependent 5-hydroxyuridine (ho5U) modification at position 34 in tRNAs. The chain is tRNA uridine(34) hydroxylase from Colwellia psychrerythraea (strain 34H / ATCC BAA-681) (Vibrio psychroerythus).